A 156-amino-acid polypeptide reads, in one-letter code: ATP synthase subunit b (156 aa).

A helical transmembrane segment spans residues 7–27; the sequence is LIGQAIWFALFVFFCMKFVWP.

It belongs to the ATPase B chain family. In terms of assembly, F-type ATPases have 2 components, F(1) - the catalytic core - and F(0) - the membrane proton channel. F(1) has five subunits: alpha(3), beta(3), gamma(1), delta(1), epsilon(1). F(0) has three main subunits: a(1), b(2) and c(10-14). The alpha and beta chains form an alternating ring which encloses part of the gamma chain. F(1) is attached to F(0) by a central stalk formed by the gamma and epsilon chains, while a peripheral stalk is formed by the delta and b chains.

The protein resides in the cell inner membrane. F(1)F(0) ATP synthase produces ATP from ADP in the presence of a proton or sodium gradient. F-type ATPases consist of two structural domains, F(1) containing the extramembraneous catalytic core and F(0) containing the membrane proton channel, linked together by a central stalk and a peripheral stalk. During catalysis, ATP synthesis in the catalytic domain of F(1) is coupled via a rotary mechanism of the central stalk subunits to proton translocation. Its function is as follows. Component of the F(0) channel, it forms part of the peripheral stalk, linking F(1) to F(0). The sequence is that of ATP synthase subunit b from Alcanivorax borkumensis (strain ATCC 700651 / DSM 11573 / NCIMB 13689 / SK2).